The chain runs to 320 residues: Porphobilinogen deaminase (320 aa).

Cys-251 bears the S-(dipyrrolylmethanemethyl)cysteine mark.

The protein belongs to the HMBS family. Monomer. Dipyrromethane is required as a cofactor.

The catalysed reaction is 4 porphobilinogen + H2O = hydroxymethylbilane + 4 NH4(+). The protein operates within porphyrin-containing compound metabolism; protoporphyrin-IX biosynthesis; coproporphyrinogen-III from 5-aminolevulinate: step 2/4. Tetrapolymerization of the monopyrrole PBG into the hydroxymethylbilane pre-uroporphyrinogen in several discrete steps. The polypeptide is Porphobilinogen deaminase (Phenylobacterium zucineum (strain HLK1)).